The primary structure comprises 381 residues: tRNA pseudouridine synthase D (381 aa).

The active-site Nucleophile is Asp-81. Positions 160–335 (GMPNYFGSQR…TLGSRRFFWV (176 aa)) constitute a TRUD domain.

This sequence belongs to the pseudouridine synthase TruD family.

It catalyses the reaction uridine(13) in tRNA = pseudouridine(13) in tRNA. Its function is as follows. Responsible for synthesis of pseudouridine from uracil-13 in transfer RNAs. This is tRNA pseudouridine synthase D from Helicobacter pylori (strain J99 / ATCC 700824) (Campylobacter pylori J99).